Consider the following 258-residue polypeptide: Alpha- and beta-fibrinogenase stejnefibrase-1 (258 aa).

An N-terminal signal peptide occupies residues 1-18; it reads MELIRVLANLLILQLSYA. The propeptide occupies 19–24; sequence QKSSEL. A Peptidase S1 domain is found at 25-249; sequence IIGGDECNID…HLDWIQNIIA (225 aa). 6 disulfide bridges follow: Cys31–Cys163, Cys50–Cys66, Cys98–Cys256, Cys142–Cys210, Cys174–Cys189, and Cys200–Cys225. Catalysis depends on His65, which acts as the Charge relay system. Asn103 is a glycosylation site (N-linked (GlcNAc...) asparagine). Asp110 (charge relay system) is an active-site residue. N-linked (GlcNAc...) asparagine glycosylation is found at Asn121, Asn122, Asn154, and Asn170. Ser204 acts as the Charge relay system in catalysis.

It belongs to the peptidase S1 family. Snake venom subfamily. Monomer. Expressed by the venom gland.

It is found in the secreted. Its activity is regulated as follows. Its activity is inhibited by PMSF and p-nitrophenyl-p-guanidinobenzoate (NPGB). In terms of biological role, snake venom serine protease. Degrades concomitantly alpha- (FGA) and beta-chains of fibrinogen (FGB). The sequence is that of Alpha- and beta-fibrinogenase stejnefibrase-1 from Trimeresurus stejnegeri (Chinese green tree viper).